Reading from the N-terminus, the 91-residue chain is DNA-directed RNA polymerase subunit omega (91 aa).

This sequence belongs to the RNA polymerase subunit omega family. In terms of assembly, the RNAP catalytic core consists of 2 alpha, 1 beta, 1 beta' and 1 omega subunit. When a sigma factor is associated with the core the holoenzyme is formed, which can initiate transcription.

It catalyses the reaction RNA(n) + a ribonucleoside 5'-triphosphate = RNA(n+1) + diphosphate. Its function is as follows. Promotes RNA polymerase assembly. Latches the N- and C-terminal regions of the beta' subunit thereby facilitating its interaction with the beta and alpha subunits. In Nocardia farcinica (strain IFM 10152), this protein is DNA-directed RNA polymerase subunit omega.